The chain runs to 129 residues: MQLPSRGTDWIAQVLRLPRNAGRGLIWLYRHTLSPLVGYNCRHYPTCSMYGDEAIRKFGLWAGGWMTLARLLRCQPWGTSGIDLVPQTAPSRARWYLPWRYARWRGVNAPPPDVAEPCGCGSHSQLTPH.

The protein belongs to the UPF0161 family.

It localises to the cell inner membrane. Its function is as follows. Could be involved in insertion of integral membrane proteins into the membrane. In Rhodopseudomonas palustris (strain ATCC BAA-98 / CGA009), this protein is Putative membrane protein insertion efficiency factor.